Here is a 98-residue protein sequence, read N- to C-terminus: uncharacterized protein (98 aa).

Basic residues predominate over residues 19–31 (RRMSKRSKNKAKK). Residues 19–47 (RRMSKRSKNKAKKERVPVEDRPPTPMPTS) are disordered.

The protein belongs to the lymphocryptovirus BNLF2B family.

This is an uncharacterized protein from Epstein-Barr virus (strain AG876) (HHV-4).